A 178-amino-acid chain; its full sequence is Large ribosomal subunit protein uL6 (178 aa).

Belongs to the universal ribosomal protein uL6 family. As to quaternary structure, part of the 50S ribosomal subunit.

In terms of biological role, this protein binds to the 23S rRNA, and is important in its secondary structure. It is located near the subunit interface in the base of the L7/L12 stalk, and near the tRNA binding site of the peptidyltransferase center. The polypeptide is Large ribosomal subunit protein uL6 (Campylobacter curvus (strain 525.92)).